Reading from the N-terminus, the 498-residue chain is ATP synthase subunit beta, chloroplastic (498 aa).

172-179 (GGAGVGKT) is an ATP binding site.

This sequence belongs to the ATPase alpha/beta chains family. As to quaternary structure, F-type ATPases have 2 components, CF(1) - the catalytic core - and CF(0) - the membrane proton channel. CF(1) has five subunits: alpha(3), beta(3), gamma(1), delta(1), epsilon(1). CF(0) has four main subunits: a(1), b(1), b'(1) and c(9-12).

It localises to the plastid. Its subcellular location is the chloroplast thylakoid membrane. It catalyses the reaction ATP + H2O + 4 H(+)(in) = ADP + phosphate + 5 H(+)(out). Its function is as follows. Produces ATP from ADP in the presence of a proton gradient across the membrane. The catalytic sites are hosted primarily by the beta subunits. In Brasenia schreberi (Water shield), this protein is ATP synthase subunit beta, chloroplastic.